Consider the following 1228-residue polypeptide: Membrane-anchored lipid-binding protein LAM1 (1228 aa).

Residues M1–K1062 lie on the Cytoplasmic side of the membrane. In terms of domain architecture, PH spans E308–R421. The VASt domain occupies E773–N978. The chain crosses the membrane as a helical span at residues T1063–I1083. Topologically, residues H1084–V1228 are lumenal. An N-linked (GlcNAc...) asparagine glycan is attached at N1205.

This sequence belongs to the SIP3 family.

Its subcellular location is the mitochondrion membrane. The protein localises to the endoplasmic reticulum membrane. Its function is as follows. Involved in mitochondrial fragmentation during programmed cell death in response to high levels of alpha-factor mating pheromone or the drug amiodarone. May be involved in sterol transfer between intracellular membranes. This chain is Membrane-anchored lipid-binding protein LAM1, found in Saccharomyces cerevisiae (strain ATCC 204508 / S288c) (Baker's yeast).